We begin with the raw amino-acid sequence, 466 residues long: Argininosuccinate lyase (466 aa).

The protein belongs to the lyase 1 family. Argininosuccinate lyase subfamily.

Its subcellular location is the cytoplasm. It catalyses the reaction 2-(N(omega)-L-arginino)succinate = fumarate + L-arginine. Its pathway is amino-acid biosynthesis; L-arginine biosynthesis; L-arginine from L-ornithine and carbamoyl phosphate: step 3/3. The protein is Argininosuccinate lyase of Bartonella tribocorum (strain CIP 105476 / IBS 506).